Reading from the N-terminus, the 401-residue chain is Probable tRNA sulfurtransferase (401 aa).

One can recognise a THUMP domain in the interval 60-165 (EPIIDKLKNV…QEGTYITCHD (106 aa)). ATP is bound by residues 183 to 184 (ML), 208 to 209 (HF), Arg-265, Gly-287, and Gln-296.

The protein belongs to the ThiI family.

The protein resides in the cytoplasm. The enzyme catalyses [ThiI sulfur-carrier protein]-S-sulfanyl-L-cysteine + a uridine in tRNA + 2 reduced [2Fe-2S]-[ferredoxin] + ATP + H(+) = [ThiI sulfur-carrier protein]-L-cysteine + a 4-thiouridine in tRNA + 2 oxidized [2Fe-2S]-[ferredoxin] + AMP + diphosphate. It catalyses the reaction [ThiS sulfur-carrier protein]-C-terminal Gly-Gly-AMP + S-sulfanyl-L-cysteinyl-[cysteine desulfurase] + AH2 = [ThiS sulfur-carrier protein]-C-terminal-Gly-aminoethanethioate + L-cysteinyl-[cysteine desulfurase] + A + AMP + 2 H(+). The protein operates within cofactor biosynthesis; thiamine diphosphate biosynthesis. Catalyzes the ATP-dependent transfer of a sulfur to tRNA to produce 4-thiouridine in position 8 of tRNAs, which functions as a near-UV photosensor. Also catalyzes the transfer of sulfur to the sulfur carrier protein ThiS, forming ThiS-thiocarboxylate. This is a step in the synthesis of thiazole, in the thiamine biosynthesis pathway. The sulfur is donated as persulfide by IscS. The chain is Probable tRNA sulfurtransferase from Geobacillus sp. (strain WCH70).